The following is a 270-amino-acid chain: Flavodoxin/ferredoxin--NADP reductase (270 aa).

Positions 12–113 (VLPDAQTVTS…PKPVGTLVID (102 aa)) constitute an FAD-binding FR-type domain. FAD is bound by residues 62 to 65 (RAYS), 78 to 80 (YSI), and 86 to 88 (PLT). Thr126 contributes to the NADP(+) binding site. Thr128 contributes to the FAD binding site. NADP(+) contacts are provided by residues Arg156, 192-193 (TR), Arg201, and Asp238. An FAD-binding site is contributed by 264 to 270 (AFVGEGI).

Belongs to the ferredoxin--NADP reductase type 1 family. As to quaternary structure, monomer. Requires FAD as cofactor.

It localises to the cytoplasm. It carries out the reaction 2 reduced [2Fe-2S]-[ferredoxin] + NADP(+) + H(+) = 2 oxidized [2Fe-2S]-[ferredoxin] + NADPH. The enzyme catalyses reduced [flavodoxin] + NADP(+) = oxidized [flavodoxin] + NADPH + 2 H(+). Functionally, transports electrons between flavodoxin or ferredoxin and NADPH. In Rhodobacter capsulatus (Rhodopseudomonas capsulata), this protein is Flavodoxin/ferredoxin--NADP reductase.